A 116-amino-acid chain; its full sequence is Large ribosomal subunit protein uL18 (116 aa).

This sequence belongs to the universal ribosomal protein uL18 family. In terms of assembly, part of the 50S ribosomal subunit; part of the 5S rRNA/L5/L18/L25 subcomplex. Contacts the 5S and 23S rRNAs.

This is one of the proteins that bind and probably mediate the attachment of the 5S RNA into the large ribosomal subunit, where it forms part of the central protuberance. In Psychrobacter arcticus (strain DSM 17307 / VKM B-2377 / 273-4), this protein is Large ribosomal subunit protein uL18.